The chain runs to 511 residues: GMP synthase [glutamine-hydrolyzing] (511 aa).

A Glutamine amidotransferase type-1 domain is found at 5-195 (PIVVLDFGSQ…AKHICGCEST (191 aa)). The Nucleophile role is filled by cysteine 82. Active-site residues include histidine 169 and glutamate 171. Residues 196 to 386 (WNMGSFAKEQ…LGLPKSMISR (191 aa)) form the GMPS ATP-PPase domain. 223-229 (SGGVDSS) contributes to the ATP binding site.

Homodimer.

It catalyses the reaction XMP + L-glutamine + ATP + H2O = GMP + L-glutamate + AMP + diphosphate + 2 H(+). Its pathway is purine metabolism; GMP biosynthesis; GMP from XMP (L-Gln route): step 1/1. In terms of biological role, catalyzes the synthesis of GMP from XMP. This Aliarcobacter butzleri (strain RM4018) (Arcobacter butzleri) protein is GMP synthase [glutamine-hydrolyzing].